The following is a 227-amino-acid chain: Atypical response regulator protein ChxR (227 aa).

Residues 6–108 form the Response regulatory domain; that stretch reads HVLLVSEHWD…ILKSAISLFL (103 aa). Positions 117 to 213 form a DNA-binding region, ompR/PhoB-type; it reads PESIRFGPNV…LRGVGYLFSD (97 aa).

As to quaternary structure, homodimer.

Functionally, may be a global positive regulator of transcription. Binds a cis-acting element of its own promoter DNA sequence and is hence probably also involved in its own transcription activation. The recognition sequence is 5'-WHGAWNH-N(3-5)-WHGAWNH-3', where W is A/T, H is C/A/T, N is G/C/A/T and the linker length in the middle is 3 to 5 nucleotides. The polypeptide is Atypical response regulator protein ChxR (Chlamydia trachomatis serovar L2 (strain ATCC VR-902B / DSM 19102 / 434/Bu)).